The chain runs to 214 residues: MMGLIGQKLGMTRIFTEEGTVYPVTIIKVKENRITQIKTISRDLYHAVQVTTGIKKSNKLLKPEIGHFLKSGVKIGKGLWEFKLTNSSINDFKIGQSLNLELFSNIKKVDIIGTSKGKGFCGTVKRWNFHTQDATHGNSLSHRAPGSIGQNQTPGRVFKGKKMAGHLGNHRVTVQNLDIVKIDLNQEIILVKGAVPGYSGGNIIIKPAIKTRGV.

The interval 134–153 (ATHGNSLSHRAPGSIGQNQT) is disordered. N5-methylglutamine is present on Q152.

It belongs to the universal ribosomal protein uL3 family. As to quaternary structure, part of the 50S ribosomal subunit. Forms a cluster with proteins L14 and L19. In terms of processing, methylated by PrmB.

In terms of biological role, one of the primary rRNA binding proteins, it binds directly near the 3'-end of the 23S rRNA, where it nucleates assembly of the 50S subunit. This is Large ribosomal subunit protein uL3 from Buchnera aphidicola subsp. Baizongia pistaciae (strain Bp).